Here is a 181-residue protein sequence, read N- to C-terminus: MDKKQFIKICRKLYDRKYVVGSGGNVSVKEGDKIYLTPTGSILGFLKEDDIAEMDLDGNVIKGKPTSEKNLHLMIYRKRNDINAIIHTHSLISTFLSTINKEIELLTPEGKIFLKKIGYVDYYEAGSLKLAEETAKRDEDVIILKNHGVVCLGKDLIDAYIKVEVLEEQAKLTLLNLLVKK.

Substrate is bound by residues 24-25 (GN), 39-40 (TG), and 66-67 (TS). Glutamate 68 functions as the Proton donor/acceptor in the catalytic mechanism. Zn(2+) contacts are provided by glutamate 68, histidine 87, histidine 89, and histidine 147.

It belongs to the aldolase class II family. AraD/FucA subfamily. In terms of assembly, homotetramer. It depends on Zn(2+) as a cofactor.

The enzyme catalyses L-fuculose 1-phosphate = (S)-lactaldehyde + dihydroxyacetone phosphate. The protein operates within cofactor biosynthesis; coenzyme F420 biosynthesis. Trimethyl phosphonoacetate and DL-threose are competitive inhibitors with respect to dihydroxyacetone phosphate, and uncompetitive inhibitors with respect to DL-glyceraldehyde. Its function is as follows. Involved in the biosynthesis of the coenzyme F420 which requires phospholactate produced via the aldol cleavage of L-fuculose 1-phosphate and the NAD(+)-dependent oxidation of (S)-lactaldehyde. Catalyzes the reversible cleavage of L-fuculose 1-phosphate (Fuc1P) to yield dihydroxyacetone phosphate (DHAP) and S-lactaldehyde. FucA possesses a high specificity for the dihydroxyacetone phosphate (DHAP), but accepts a great variety of different aldehydes such as DL-glyceraldehyde and glycolaldehyde. This Methanocaldococcus jannaschii (strain ATCC 43067 / DSM 2661 / JAL-1 / JCM 10045 / NBRC 100440) (Methanococcus jannaschii) protein is L-fuculose phosphate aldolase (fucA).